Here is a 161-residue protein sequence, read N- to C-terminus: Allophycocyanin alpha chain (161 aa).

At asparagine 71 the chain carries N4-methylasparagine. Residue cysteine 81 coordinates (2R,3E)-phycocyanobilin.

The protein belongs to the phycobiliprotein family. Heterodimer of an alpha and a beta chain. Contains one covalently linked phycocyanobilin chromophore.

The protein localises to the plastid. It is found in the chloroplast thylakoid membrane. Its function is as follows. Light-harvesting photosynthetic bile pigment-protein from the phycobiliprotein complex. Allophycocyanin has a maximum absorption at approximately 650 nanometers. The polypeptide is Allophycocyanin alpha chain (apcA) (Cyanidium caldarium (Red alga)).